The following is a 396-amino-acid chain: Putative F-box protein At4g22660 (396 aa).

An F-box domain is found at proline 7 to leucine 58.

The polypeptide is Putative F-box protein At4g22660 (Arabidopsis thaliana (Mouse-ear cress)).